A 227-amino-acid chain; its full sequence is Putative molybdenum transport system permease protein YvgM (227 aa).

Transmembrane regions (helical) follow at residues valine 17–leucine 37, phenylalanine 57–glycine 77, valine 94–tyrosine 114, valine 142–serine 162, and threonine 201–isoleucine 221. The ABC transmembrane type-1 domain maps to valine 17 to isoleucine 221.

The protein belongs to the binding-protein-dependent transport system permease family. CysTW subfamily.

The protein localises to the cell membrane. Its function is as follows. could be part of the binding-protein-dependent transport system for molybdenum; probably responsible for the translocation of the substrate across the membrane. This Bacillus subtilis (strain 168) protein is Putative molybdenum transport system permease protein YvgM (yvgM).